The following is a 173-amino-acid chain: Soluble secreted antigen MPT53 (173 aa).

Residues 1-38 (MSLRLVSPIKAFADGIVAVAIAVVLMFGLANTPRAVAA) form the signal peptide. A disulfide bridge connects residues cysteine 73 and cysteine 76.

It belongs to the thioredoxin family.

The protein resides in the secreted. Its function is as follows. Disulfide oxidoreductase that catalyzes the oxidation of reduced, unfolded secreted proteins to form disulfide bonds. Despite a weak homology to thioredoxin this cannot serve as a substrate for thioredoxin reductase. This Mycobacterium bovis (strain ATCC BAA-935 / AF2122/97) protein is Soluble secreted antigen MPT53 (mpt53).